The following is a 339-amino-acid chain: DNA-directed RNA polymerase subunit alpha (339 aa).

The segment at 1–233 (MVREKVRIST…DLFIPFLHAE (233 aa)) is alpha N-terminal domain (alpha-NTD). The segment at 267–339 (IALKSIFIDQ…FTINLPKNKF (73 aa)) is alpha C-terminal domain (alpha-CTD).

Belongs to the RNA polymerase alpha chain family. As to quaternary structure, in plastids the minimal PEP RNA polymerase catalytic core is composed of four subunits: alpha, beta, beta', and beta''. When a (nuclear-encoded) sigma factor is associated with the core the holoenzyme is formed, which can initiate transcription.

It localises to the plastid. The protein localises to the chloroplast. It catalyses the reaction RNA(n) + a ribonucleoside 5'-triphosphate = RNA(n+1) + diphosphate. Its function is as follows. DNA-dependent RNA polymerase catalyzes the transcription of DNA into RNA using the four ribonucleoside triphosphates as substrates. The chain is DNA-directed RNA polymerase subunit alpha from Populus trichocarpa (Western balsam poplar).